We begin with the raw amino-acid sequence, 622 residues long: MSTDNKQSLPSITLAAIGVVYGDIGTSPLYTLRECLSGQFGFGVERDAVFGFLSLIFWLLIFVVSIKYLTFVMRADNAGEGGILTLMSLAGRNTSARTTSMLVIMGLIGGSFFYGEVVITPAISVMSAIEGLEIVAPQLDTWIVPLSIIVLTLLFMIQKHGTGMVGKLFAPIMLTWFLILAVLGLRSIIANPEVLHALNPVWAVRFFLEYKTVSFIALGAVVLSITGVEALYADMGHFGKFPIRLAWFTVVLPSLVLNYFGQGALLLKHPEAIKNPFFLLAPDWALIPLLILAALATVIASQAVISGVFSLTRQAVRLGYLSPMRIIHTSEMESGQIYIPFVNWLLYFAVVVVIVSFEHSSNLAAAYGIAVTGTMVLTSILSTTVARKNWHWNKYFVALILIAFLCVDIPLFSANLDKLLSGGWLPLSLGLIMFTIMTTWKSERFRLLRRMHEHGNSLEAMIASLEKSPPVRVPGTAVYMSRALSVIPFALLHNLKHNKVLHERVILLTLRTEDAPYVHNVRRVQIEQLSPTFWRVVASYGWRETPNVEEVFHRCGLEGLSCRMMETSFFMSHESLIVGKRPWYLRLRGKLYLLLQRNALRAPDQFEIPPNRVIELGTQVEI.

12 consecutive transmembrane segments (helical) span residues 12-32 (ITLAAIGVVYGDIGTSPLYTL), 49-69 (VFGFLSLIFWLLIFVVSIKYL), 103-123 (VIMGLIGGSFFYGEVVITPAI), 137-157 (PQLDTWIVPLSIIVLTLLFMI), 165-185 (VGKLFAPIMLTWFLILAVLGL), 213-233 (VSFIALGAVVLSITGVEALYA), 247-267 (WFTVVLPSLVLNYFGQGALLL), 276-296 (PFFLLAPDWALIPLLILAALA), 337-357 (IYIPFVNWLLYFAVVVVIVSF), 363-383 (LAAAYGIAVTGTMVLTSILST), 396-416 (FVALILIAFLCVDIPLFSANL), and 419-439 (LLSGGWLPLSLGLIMFTIMTT).

It belongs to the HAK/KUP transporter (TC 2.A.72) family.

It localises to the cell inner membrane. The enzyme catalyses K(+)(in) + H(+)(in) = K(+)(out) + H(+)(out). In terms of biological role, responsible for the low-affinity transport of potassium into the cell. Likely operates as a K(+):H(+) symporter. This Salmonella gallinarum (strain 287/91 / NCTC 13346) protein is Low affinity potassium transport system protein Kup.